The sequence spans 86 residues: Small ribosomal subunit protein bS20 (86 aa).

Residues 1-11 show a composition bias toward basic residues; sequence MANIKQQKKRN. Residues 1–20 are disordered; that stretch reads MANIKQQKKRNKTNEKRRLQ.

This sequence belongs to the bacterial ribosomal protein bS20 family.

Its function is as follows. Binds directly to 16S ribosomal RNA. This is Small ribosomal subunit protein bS20 from Aster yellows witches'-broom phytoplasma (strain AYWB).